A 122-amino-acid polypeptide reads, in one-letter code: Histone H2B, gonadal (122 aa).

Residues 1–31 (MPPKPSGKGQKKAGKAKGAPRTDKKRRRKRK) are disordered. A N,N-dimethylproline modification is found at Pro2. Residue Ser109 is glycosylated (O-linked (GlcNAc) serine). Lys117 participates in a covalent cross-link: Glycyl lysine isopeptide (Lys-Gly) (interchain with G-Cter in ubiquitin).

The protein belongs to the histone H2B family. In terms of assembly, the nucleosome is a histone octamer containing two molecules each of H2A, H2B, H3 and H4 assembled in one H3-H4 heterotetramer and two H2A-H2B heterodimers. The octamer wraps approximately 147 bp of DNA. Post-translationally, monoubiquitination of Lys-117 gives a specific tag for epigenetic transcriptional activation and is also prerequisite for histone H3 'Lys-4' and 'Lys-79' methylation. In terms of processing, glcNAcylation at Ser-109 promotes monoubiquitination of Lys-117. It fluctuates in response to extracellular glucose, and associates with transcribed genes.

The protein localises to the nucleus. The protein resides in the chromosome. Functionally, core component of nucleosome. Nucleosomes wrap and compact DNA into chromatin, limiting DNA accessibility to the cellular machineries which require DNA as a template. Histones thereby play a central role in transcription regulation, DNA repair, DNA replication and chromosomal stability. DNA accessibility is regulated via a complex set of post-translational modifications of histones, also called histone code, and nucleosome remodeling. In Asterias rubens (Common European starfish), this protein is Histone H2B, gonadal.